Here is a 203-residue protein sequence, read N- to C-terminus: RNA pyrophosphohydrolase (203 aa).

Residues glycine 6–threonine 149 enclose the Nudix hydrolase domain. The Nudix box motif lies at glycine 38–glycine 59. A disordered region spans residues arginine 170–glutamate 203. Basic and acidic residues predominate over residues arginine 173–aspartate 185.

This sequence belongs to the Nudix hydrolase family. RppH subfamily. Requires a divalent metal cation as cofactor.

Functionally, accelerates the degradation of transcripts by removing pyrophosphate from the 5'-end of triphosphorylated RNA, leading to a more labile monophosphorylated state that can stimulate subsequent ribonuclease cleavage. The polypeptide is RNA pyrophosphohydrolase (Leptothrix cholodnii (strain ATCC 51168 / LMG 8142 / SP-6) (Leptothrix discophora (strain SP-6))).